The sequence spans 321 residues: Lipoyl synthase (321 aa).

Residues C68, C73, C79, C94, C98, C101, and S308 each coordinate [4Fe-4S] cluster. A Radical SAM core domain is found at 80 to 297 (FNHGTATFMI…KELAESIGFT (218 aa)).

This sequence belongs to the radical SAM superfamily. Lipoyl synthase family. It depends on [4Fe-4S] cluster as a cofactor.

Its subcellular location is the cytoplasm. The catalysed reaction is [[Fe-S] cluster scaffold protein carrying a second [4Fe-4S](2+) cluster] + N(6)-octanoyl-L-lysyl-[protein] + 2 oxidized [2Fe-2S]-[ferredoxin] + 2 S-adenosyl-L-methionine + 4 H(+) = [[Fe-S] cluster scaffold protein] + N(6)-[(R)-dihydrolipoyl]-L-lysyl-[protein] + 4 Fe(3+) + 2 hydrogen sulfide + 2 5'-deoxyadenosine + 2 L-methionine + 2 reduced [2Fe-2S]-[ferredoxin]. Its pathway is protein modification; protein lipoylation via endogenous pathway; protein N(6)-(lipoyl)lysine from octanoyl-[acyl-carrier-protein]: step 2/2. Functionally, catalyzes the radical-mediated insertion of two sulfur atoms into the C-6 and C-8 positions of the octanoyl moiety bound to the lipoyl domains of lipoate-dependent enzymes, thereby converting the octanoylated domains into lipoylated derivatives. The polypeptide is Lipoyl synthase (Shewanella pealeana (strain ATCC 700345 / ANG-SQ1)).